Here is a 209-residue protein sequence, read N- to C-terminus: Uracil phosphoribosyltransferase (209 aa).

Residues Arg79, Arg104, and 131 to 139 contribute to the 5-phospho-alpha-D-ribose 1-diphosphate site; that span reads DPMLATGVS. Residues Ile194 and 199–201 each bind uracil; that span reads GDA. Asp200 is a binding site for 5-phospho-alpha-D-ribose 1-diphosphate.

The protein belongs to the UPRTase family. Requires Mg(2+) as cofactor.

It carries out the reaction UMP + diphosphate = 5-phospho-alpha-D-ribose 1-diphosphate + uracil. The protein operates within pyrimidine metabolism; UMP biosynthesis via salvage pathway; UMP from uracil: step 1/1. Allosterically activated by GTP. Functionally, catalyzes the conversion of uracil and 5-phospho-alpha-D-ribose 1-diphosphate (PRPP) to UMP and diphosphate. The sequence is that of Uracil phosphoribosyltransferase from Thermotoga maritima (strain ATCC 43589 / DSM 3109 / JCM 10099 / NBRC 100826 / MSB8).